The following is a 377-amino-acid chain: Oleosin-B4 (377 aa).

The segment at 1–37 is polar; the sequence is MRNEIQNETAQTDQTQGSMFSFFNLFPFLLPMFEVIK. 3 consecutive transmembrane segments (helical) span residues 16-36, 38-58, and 69-89; these read QGSM…FEVI, MVVA…TLSG, and LFII…VLAA. The segment at 38 to 133 is hydrophobic; the sequence is MVVASVASVV…IIPESIKPSN (96 aa). 3 repeat units span residues 115–124, 125–134, and 135–144. Residues 115–144 form a 3 X 10 AA tandem repeats of I-P-E-[SG]-I-K-P-S-N-[IV] region; sequence IPESIKPSNIIPESIKPSNIIPEGIKPSNI. The segment at 158 to 377 is disordered; that stretch reads KIKAKKEEKS…SSHGSGGKHI (220 aa). Basic and acidic residues-rich tracts occupy residues 162 to 185 and 195 to 231; these read KKEE…KGED and DEDK…EGKH. Residues 196–202 form a 2-1 repeat; sequence EDKHGSG. One copy of the 2.1 repeat lies at 196–202; sequence EDKHGSG. A 3 X 6 AA tandem repeats of E-[SD]-[KT]-H-G-[KS]-G region spans residues 196–222; it reads EDKHGSGAKHGKGESKHGKGESTHGKG. The stretch at 204–208 is one 2-2; truncated repeat; sequence KHGKG. Repeat copies occupy residues 209–215, 216–222, 230–247, 260–277, 278–295, 296–313, and 355–359. Residues 230 to 313 form a 4 X 18 AA tandem repeats of K-H-E-S-G-G-[SA]-[PSA]-M-G-G-G-K-H-G-S-[GE]-G region; it reads KHGSGGSSMG…MGGGKHGSGG (84 aa). A compositionally biased stretch (gly residues) spans 232 to 244; it reads GSGGSSMGGGKHG. Over residues 247-263 the composition is skewed to basic and acidic residues; that stretch reads GKHETGGKHGSGGKHES. Gly residues-rich tracts occupy residues 280 to 292 and 302 to 314; these read GSGG…GKHG and SAMG…SGGK. The segment covering 350–369 has biased composition (low complexity); sequence SSTSESSDGSSDGSSSDGSS. The tract at residues 355–368 is 3 X 5 AA tandem repeats of S-S-D-G-S; it reads SSDGSSDGSSSDGS. Residues 360–363 form a 4-2; truncated repeat; sequence SDGS. One copy of the 4-3 repeat lies at 364 to 368; it reads SSDGS.

It belongs to the oleosin family. As to expression, the full-length protein is found in the tapetal lipid bodies of immature anthers, the proteolytically cleaved C-terminal product is found on the coats of pollen grains. No expression is detected in other flower organs, siliques or seedlings.

Its subcellular location is the lipid droplet. It localises to the membrane. Its function is as follows. Many of the major pollen coat proteins are derived from endoproteolytic cleavage of oleosin-like proteins. The chain is Oleosin-B4 from Brassica napus (Rape).